A 252-amino-acid polypeptide reads, in one-letter code: F-box protein At5g39250 (252 aa).

The F-box domain maps to 1 to 42 (MFSEEVLKNVFPLLEGEDLASCMGVCKQWRDIARDDFYWKCQ).

The sequence is that of F-box protein At5g39250 from Arabidopsis thaliana (Mouse-ear cress).